The following is a 172-amino-acid chain: Galectin-related protein (172 aa).

Alanine 2 carries the N-acetylalanine modification. Residues serine 22 and serine 25 each carry the phosphoserine modification. The Galectin domain occupies proline 39 to isoleucine 168.

In terms of assembly, monomer.

Does not bind lactose, and may not bind carbohydrates. This Homo sapiens (Human) protein is Galectin-related protein (LGALSL).